The primary structure comprises 67 residues: Large ribosomal subunit protein bL32 (67 aa).

Positions 1-19 (MAVPKRKMSRANTRMRRSQ) are enriched in basic residues. Residues 1 to 22 (MAVPKRKMSRANTRMRRSQWKA) are disordered.

This sequence belongs to the bacterial ribosomal protein bL32 family.

The protein is Large ribosomal subunit protein bL32 of Kocuria rhizophila (strain ATCC 9341 / DSM 348 / NBRC 103217 / DC2201).